We begin with the raw amino-acid sequence, 1070 residues long: DNA-directed RNA polymerase subunit beta (1070 aa).

This sequence belongs to the RNA polymerase beta chain family. As to quaternary structure, in plastids the minimal PEP RNA polymerase catalytic core is composed of four subunits: alpha, beta, beta', and beta''. When a (nuclear-encoded) sigma factor is associated with the core the holoenzyme is formed, which can initiate transcription.

The protein localises to the plastid. Its subcellular location is the chloroplast. The catalysed reaction is RNA(n) + a ribonucleoside 5'-triphosphate = RNA(n+1) + diphosphate. In terms of biological role, DNA-dependent RNA polymerase catalyzes the transcription of DNA into RNA using the four ribonucleoside triphosphates as substrates. The polypeptide is DNA-directed RNA polymerase subunit beta (Lotus japonicus (Lotus corniculatus var. japonicus)).